We begin with the raw amino-acid sequence, 305 residues long: Tetraspanin-12 (305 aa).

The Cytoplasmic portion of the chain corresponds to 1–12 (MAREDSVKCLRC). S-palmitoyl cysteine attachment occurs at residues Cys-9 and Cys-12. The helical transmembrane segment at 13-33 (LLYALNLLFWLMSISVLAVSA) threads the bilayer. Over 34 to 59 (WMRDYLNNVLTLTAETRVEEAVILTY) the chain is Extracellular. The helical transmembrane segment at 60 to 80 (FPVVHPVMIAVCCFLIIVGML) threads the bilayer. Residues 81 to 89 (GYCGTVKRN) are Cytoplasmic-facing. Cys-83 is lipidated: S-palmitoyl cysteine. The chain crosses the membrane as a helical span at residues 90-110 (LLLLAWYFGSLLVIFCVELAC). At 111-224 (GVWTYEQELM…RGTKQLQVLR (114 aa)) the chain is on the extracellular side. The helical transmembrane segment at 225–245 (FLGISIGVTQILAMILTITLL) threads the bilayer. Over 246–305 (WALYYDRREPGTDQMMSLKNDNSQHLSCPSVELLKPSLSRIFEHTSMANSFNTHFEMEEL) the chain is Cytoplasmic.

It belongs to the tetraspanin (TM4SF) family. In terms of assembly, component of a complex, at least composed of TSPAN12, FZD4 and norrin (NDP). Interacts (when palmitoylated) with ADAM10. Interacts with MMP14/MT1-MMP. Post-translationally, palmitoylated; required for interaction with ADAM10. The precise position of palmitoylated residues is unclear and occurs either on Cys-9, Cys-12 and/or Cys-83.

It is found in the cell membrane. Regulator of cell surface receptor signal transduction. Plays a central role in retinal vascularization by regulating norrin (NDP) signal transduction. Acts in concert with norrin (NDP) to promote FZD4 multimerization and subsequent activation of FZD4, leading to promote accumulation of beta-catenin (CTNNB1) and stimulate LEF/TCF-mediated transcriptional programs. Suprisingly, it only activates the norrin (NDP)-dependent activation of FZD4, while it does not activate the Wnt-dependent activation of FZD4, suggesting the existence of a Wnt-independent signaling that also promote accumulation the beta-catenin (CTNNB1). Acts as a regulator of membrane proteinases such as ADAM10 and MMP14/MT1-MMP. Activates ADAM10-dependent cleavage activity of amyloid precursor protein (APP). Activates MMP14/MT1-MMP-dependent cleavage activity. This Homo sapiens (Human) protein is Tetraspanin-12 (TSPAN12).